The sequence spans 177 residues: Large ribosomal subunit protein uL5 (177 aa).

It belongs to the universal ribosomal protein uL5 family. In terms of assembly, part of the 50S ribosomal subunit; part of the 5S rRNA/L5/L18/L25 subcomplex. Contacts the 5S rRNA and the P site tRNA. Forms a bridge to the 30S subunit in the 70S ribosome.

Its function is as follows. This is one of the proteins that bind and probably mediate the attachment of the 5S RNA into the large ribosomal subunit, where it forms part of the central protuberance. In the 70S ribosome it contacts protein S13 of the 30S subunit (bridge B1b), connecting the 2 subunits; this bridge is implicated in subunit movement. Contacts the P site tRNA; the 5S rRNA and some of its associated proteins might help stabilize positioning of ribosome-bound tRNAs. The protein is Large ribosomal subunit protein uL5 of Ehrlichia chaffeensis (strain ATCC CRL-10679 / Arkansas).